The sequence spans 208 residues: Small ribosomal subunit protein uS4 (208 aa).

Residues K30 to K49 are disordered. Positions R98–L161 constitute an S4 RNA-binding domain.

The protein belongs to the universal ribosomal protein uS4 family. As to quaternary structure, part of the 30S ribosomal subunit. Contacts protein S5. The interaction surface between S4 and S5 is involved in control of translational fidelity.

One of the primary rRNA binding proteins, it binds directly to 16S rRNA where it nucleates assembly of the body of the 30S subunit. In terms of biological role, with S5 and S12 plays an important role in translational accuracy. This chain is Small ribosomal subunit protein uS4, found in Nitratiruptor sp. (strain SB155-2).